We begin with the raw amino-acid sequence, 422 residues long: Putative serpin-Z8 (422 aa).

Positions 369–393 (GTVAAAATMTRMLPSGVPPPPVDFV) are RCL.

It belongs to the serpin family.

In terms of biological role, probable serine protease inhibitor. The protein is Putative serpin-Z8 of Oryza sativa subsp. japonica (Rice).